Here is a 151-residue protein sequence, read N- to C-terminus: Endoribonuclease YbeY (151 aa).

Zn(2+)-binding residues include His114, His118, and His124.

This sequence belongs to the endoribonuclease YbeY family. Requires Zn(2+) as cofactor.

Its subcellular location is the cytoplasm. In terms of biological role, single strand-specific metallo-endoribonuclease involved in late-stage 70S ribosome quality control and in maturation of the 3' terminus of the 16S rRNA. In Hamiltonella defensa subsp. Acyrthosiphon pisum (strain 5AT), this protein is Endoribonuclease YbeY.